Consider the following 340-residue polypeptide: Flap endonuclease 1 (340 aa).

Residues 1–98 are N-domain; it reads MGVDLGGLVE…ETIKARAEVR (98 aa). Mg(2+)-binding residues include D27, D80, E151, E153, D172, D174, and D235. The I-domain stretch occupies residues 115–256; that stretch reads EAYKYAQAST…TALKLVKKHG (142 aa). Residues 332–340 are interaction with PCNA; the sequence is KQKTLSSWF.

This sequence belongs to the XPG/RAD2 endonuclease family. FEN1 subfamily. In terms of assembly, interacts with PCNA. PCNA stimulates the nuclease activity without altering cleavage specificity. It depends on Mg(2+) as a cofactor.

Structure-specific nuclease with 5'-flap endonuclease and 5'-3' exonuclease activities involved in DNA replication and repair. During DNA replication, cleaves the 5'-overhanging flap structure that is generated by displacement synthesis when DNA polymerase encounters the 5'-end of a downstream Okazaki fragment. Binds the unpaired 3'-DNA end and kinks the DNA to facilitate 5' cleavage specificity. Cleaves one nucleotide into the double-stranded DNA from the junction in flap DNA, leaving a nick for ligation. Also involved in the base excision repair (BER) pathway. Acts as a genome stabilization factor that prevents flaps from equilibrating into structures that lead to duplications and deletions. Also possesses 5'-3' exonuclease activity on nicked or gapped double-stranded DNA. In Methanocella arvoryzae (strain DSM 22066 / NBRC 105507 / MRE50), this protein is Flap endonuclease 1.